Here is a 151-residue protein sequence, read N- to C-terminus: Caveolin-3 (151 aa).

The Cytoplasmic portion of the chain corresponds to 1-83 (MMAEERTDLE…RLLSTLLGVP (83 aa)). Residue K38 forms a Glycyl lysine isopeptide (Lys-Gly) (interchain with G-Cter in SUMO3) linkage. The required for interaction with DAG1 stretch occupies residues 64-114 (TFTVSKYWCYRLLSTLLGVPLALLWGFLFACISFCHIWAVVPCIKSYLIEI). Residues 84 to 104 (LALLWGFLFACISFCHIWAVV) constitute an intramembrane region (helical). Residues 105–151 (PCIKSYLIEIQCISHIYSLCIRTFCNPVFAALGQVCSNIKVMLRKEV) lie on the Cytoplasmic side of the membrane.

It belongs to the caveolin family. As to quaternary structure, homooligomer. Interacts with DYSF. Interacts with DLG1 and KCNA5; forms a ternary complex. Interacts with DAG1 (via its C-terminal); the interaction prevents binding of DAG1 with DMD. Interacts with TRIM72. Interacts with MUSK; may regulate MUSK signaling. Interacts with POPDC1. Interacts with CAVIN1, CAVIN2 and CAVIN4. Post-translationally, sumoylation with SUMO3 by PIAS4 may reduce agonist-induced internalization and desensitization of adrenergic receptor ABRD2. As to expression, expressed specifically in skeletal muscle and heart.

The protein resides in the golgi apparatus membrane. Its subcellular location is the cell membrane. It is found in the membrane. It localises to the caveola. The protein localises to the sarcolemma. Functionally, may act as a scaffolding protein within caveolar membranes. Interacts directly with G-protein alpha subunits and can functionally regulate their activity. May also regulate voltage-gated potassium channels. Plays a role in the sarcolemma repair mechanism of both skeletal muscle and cardiomyocytes that permits rapid resealing of membranes disrupted by mechanical stress. Mediates the recruitment of CAVIN2 and CAVIN3 proteins to the caveolae. This is Caveolin-3 (CAV3) from Sus scrofa (Pig).